Consider the following 71-residue polypeptide: Small ribosomal subunit protein bS21 (71 aa).

Over residues 34 to 44 (RREHYEKPTSE) the composition is skewed to basic and acidic residues. Positions 34 to 71 (RREHYEKPTSERKRKKAAAVKRHAKKLSRDNARRTRLY) are disordered. The span at 45-59 (RKRKKAAAVKRHAKK) shows a compositional bias: basic residues. Residues 60-71 (LSRDNARRTRLY) are compositionally biased toward basic and acidic residues.

The protein belongs to the bacterial ribosomal protein bS21 family.

In Idiomarina loihiensis (strain ATCC BAA-735 / DSM 15497 / L2-TR), this protein is Small ribosomal subunit protein bS21.